We begin with the raw amino-acid sequence, 542 residues long: Endonuclease 4 homolog (542 aa).

Disordered regions lie at residues 89–123 (NEEI…QTSI) and 141–234 (PFFS…ENKF). 2 stretches are compositionally biased toward low complexity: residues 99 to 115 (SKKL…QQSK) and 147 to 170 (NNAS…TTTT). The stretch at 171 to 206 (TKKRNNKDEENEDDNEEEEEEEEEEEDKKSKKKTTT) forms a coiled coil. A compositionally biased stretch (acidic residues) spans 179–196 (EENEDDNEEEEEEEEEEE). Low complexity predominate over residues 205–215 (TTTTTTTTTTA). The segment covering 216–227 (YKKKSSPKKKKV) has biased composition (basic residues). The Nuclear localization signal motif lies at 222–227 (PKKKKV). Zn(2+) is bound by residues H328, H368, E404, D438, H441, H475, D488, H490, and E520.

Belongs to the AP endonuclease 2 family. Zn(2+) serves as cofactor.

Its subcellular location is the nucleus. The enzyme catalyses Endonucleolytic cleavage to 5'-phosphooligonucleotide end-products.. Plays a role in DNA repair. It cleaves phosphodiester bonds at apurinic or apyrimidinic sites (AP sites) to produce new 5'-ends that are base-free deoxyribose 5-phosphate residues. The sequence is that of Endonuclease 4 homolog (apnA) from Dictyostelium discoideum (Social amoeba).